The chain runs to 342 residues: 4-hydroxy-2-oxovalerate aldolase (342 aa).

Residues Val7–Met257 enclose the Pyruvate carboxyltransferase domain. Arg15–Asp16 lines the substrate pocket. Asp16 serves as a coordination point for Mn(2+). His19 (proton acceptor) is an active-site residue. Ser169 and His196 together coordinate substrate. Positions 196 and 198 each coordinate Mn(2+). A substrate-binding site is contributed by Tyr287.

This sequence belongs to the 4-hydroxy-2-oxovalerate aldolase family.

The enzyme catalyses (S)-4-hydroxy-2-oxopentanoate = acetaldehyde + pyruvate. The sequence is that of 4-hydroxy-2-oxovalerate aldolase (pheE) from Geobacillus stearothermophilus (Bacillus stearothermophilus).